The sequence spans 390 residues: Branched-chain-amino-acid aminotransferase (390 aa).

Lys-225 bears the N6-(pyridoxal phosphate)lysine mark.

The protein belongs to the class-IV pyridoxal-phosphate-dependent aminotransferase family. As to quaternary structure, homodimer. Pyridoxal 5'-phosphate is required as a cofactor.

The catalysed reaction is L-leucine + 2-oxoglutarate = 4-methyl-2-oxopentanoate + L-glutamate. It catalyses the reaction L-isoleucine + 2-oxoglutarate = (S)-3-methyl-2-oxopentanoate + L-glutamate. The enzyme catalyses L-valine + 2-oxoglutarate = 3-methyl-2-oxobutanoate + L-glutamate. In terms of biological role, catalyzes the first reaction in the catabolism of the essential branched chain amino acids leucine, isoleucine, and valine. The sequence is that of Branched-chain-amino-acid aminotransferase from Monosiga brevicollis (Choanoflagellate).